The chain runs to 417 residues: Serine hydroxymethyltransferase (417 aa).

Residues L121 and 125 to 127 contribute to the (6S)-5,6,7,8-tetrahydrofolate site; that span reads GHL. Position 229 is an N6-(pyridoxal phosphate)lysine (K229). A (6S)-5,6,7,8-tetrahydrofolate-binding site is contributed by 355–357; the sequence is SPF.

This sequence belongs to the SHMT family. In terms of assembly, homodimer. It depends on pyridoxal 5'-phosphate as a cofactor.

It localises to the cytoplasm. The enzyme catalyses (6R)-5,10-methylene-5,6,7,8-tetrahydrofolate + glycine + H2O = (6S)-5,6,7,8-tetrahydrofolate + L-serine. It participates in one-carbon metabolism; tetrahydrofolate interconversion. It functions in the pathway amino-acid biosynthesis; glycine biosynthesis; glycine from L-serine: step 1/1. Its function is as follows. Catalyzes the reversible interconversion of serine and glycine with tetrahydrofolate (THF) serving as the one-carbon carrier. This reaction serves as the major source of one-carbon groups required for the biosynthesis of purines, thymidylate, methionine, and other important biomolecules. Also exhibits THF-independent aldolase activity toward beta-hydroxyamino acids, producing glycine and aldehydes, via a retro-aldol mechanism. This is Serine hydroxymethyltransferase from Yersinia enterocolitica serotype O:8 / biotype 1B (strain NCTC 13174 / 8081).